A 65-amino-acid polypeptide reads, in one-letter code: Large ribosomal subunit protein uL29 (65 aa).

This sequence belongs to the universal ribosomal protein uL29 family.

This is Large ribosomal subunit protein uL29 from Desulforapulum autotrophicum (strain ATCC 43914 / DSM 3382 / VKM B-1955 / HRM2) (Desulfobacterium autotrophicum).